We begin with the raw amino-acid sequence, 329 residues long: rRNA 2'-O-methyltransferase fibrillarin (329 aa).

Residues 1–85 (MAFGAPRGRG…GGARGGARGG (85 aa)) are disordered. Residues 13–84 (RGGFGGRGGS…RGGARGGARG (72 aa)) are compositionally biased toward gly residues. Residues 181 to 182 (TS), 200 to 201 (EF), 225 to 226 (DA), and 245 to 248 (DVAQ) each bind S-adenosyl-L-methionine.

The protein belongs to the methyltransferase superfamily. Fibrillarin family. In terms of assembly, component of box C/D small nucleolar ribonucleoprotein (snoRNP) particles that contain SNU13, NOP1, SIK1/NOP56 and NOP58, plus a guide RNA. In terms of processing, by homology to other fibrillarins, some or all of the N-terminal domain arginines are modified to asymmetric dimethylarginine (DMA).

It localises to the nucleus. The protein localises to the nucleolus. The enzyme catalyses L-glutaminyl-[histone H2A] + S-adenosyl-L-methionine = N(5)-methyl-L-glutaminyl-[histone H2A] + S-adenosyl-L-homocysteine + H(+). In terms of biological role, S-adenosyl-L-methionine-dependent methyltransferase that has the ability to methylate both RNAs and proteins. Involved in pre-rRNA processing. Utilizes the methyl donor S-adenosyl-L-methionine to catalyze the site-specific 2'-hydroxyl methylation of ribose moieties in pre-ribosomal RNA. Site specificity is provided by a guide RNA that base pairs with the substrate. Methylation occurs at a characteristic distance from the sequence involved in base pairing with the guide RNA. Also acts as a protein methyltransferase by mediating methylation of 'Gln-105' of histone H2A (H2AQ105me), a modification that impairs binding of the FACT complex and is specifically present at 35S ribosomal DNA locus. In Debaryomyces hansenii (strain ATCC 36239 / CBS 767 / BCRC 21394 / JCM 1990 / NBRC 0083 / IGC 2968) (Yeast), this protein is rRNA 2'-O-methyltransferase fibrillarin (NOP1).